The chain runs to 80 residues: MKLMCVLIVSVLVLTACQLSTADDTRDKQKDRLVRLFRKKRDSSDSGLLPRTCVMFGSMCDKEEHSICCYECDYKKGICV.

A signal peptide spans 1–22 (MKLMCVLIVSVLVLTACQLSTA). Positions 23-51 (DDTRDKQKDRLVRLFRKKRDSSDSGLLPR) are excised as a propeptide. Intrachain disulfides connect C53/C69, C60/C72, and C68/C79.

Belongs to the conotoxin O1 superfamily. As to expression, expressed by the venom duct.

The protein localises to the secreted. The chain is Conotoxin Bu3 from Conus bullatus (Bubble cone).